A 317-amino-acid polypeptide reads, in one-letter code: L-lactate dehydrogenase (317 aa).

Residues Val17, Asp38, Lys43, Tyr69, and 83–84 (GA) contribute to the NAD(+) site. Gln86 and Arg92 together coordinate substrate. NAD(+)-binding positions include Ser105, 122 to 124 (ATN), and Ser147. 124–127 (NPVD) lines the substrate pocket. 152-155 (DTAR) serves as a coordination point for substrate. Beta-D-fructose 1,6-bisphosphate-binding residues include Arg157 and His172. His179 serves as the catalytic Proton acceptor. Tyr224 bears the Phosphotyrosine mark. Thr233 provides a ligand contact to substrate.

The protein belongs to the LDH/MDH superfamily. LDH family. Homotetramer.

The protein localises to the cytoplasm. It carries out the reaction (S)-lactate + NAD(+) = pyruvate + NADH + H(+). The protein operates within fermentation; pyruvate fermentation to lactate; (S)-lactate from pyruvate: step 1/1. Its activity is regulated as follows. Allosterically activated by fructose 1,6-bisphosphate (FBP). Catalyzes the conversion of lactate to pyruvate. The polypeptide is L-lactate dehydrogenase (Bacillus caldolyticus).